The primary structure comprises 335 residues: Biotin synthase (335 aa).

A Radical SAM core domain is found at 46 to 274 (YNIQLASLFS…KSKIRLSAGR (229 aa)). [4Fe-4S] cluster-binding residues include Cys-61, Cys-65, and Cys-68. [2Fe-2S] cluster is bound by residues Cys-105, Cys-137, Cys-197, and Arg-269.

Belongs to the radical SAM superfamily. Biotin synthase family. Homodimer. The cofactor is [4Fe-4S] cluster. [2Fe-2S] cluster is required as a cofactor.

It catalyses the reaction (4R,5S)-dethiobiotin + (sulfur carrier)-SH + 2 reduced [2Fe-2S]-[ferredoxin] + 2 S-adenosyl-L-methionine = (sulfur carrier)-H + biotin + 2 5'-deoxyadenosine + 2 L-methionine + 2 oxidized [2Fe-2S]-[ferredoxin]. Its pathway is cofactor biosynthesis; biotin biosynthesis; biotin from 7,8-diaminononanoate: step 2/2. In terms of biological role, catalyzes the conversion of dethiobiotin (DTB) to biotin by the insertion of a sulfur atom into dethiobiotin via a radical-based mechanism. This chain is Biotin synthase, found in Prochlorococcus marinus (strain AS9601).